A 456-amino-acid polypeptide reads, in one-letter code: Smoothelin-like protein 2 (456 aa).

Residues 24–88 (LEGAVRALHE…RQVEALGLAT (65 aa)) are a coiled coil. At T96 the chain carries Phosphothreonine. Phosphoserine occurs at positions 98, 126, and 131. A compositionally biased stretch (polar residues) spans 120-129 (HATFSLSGRS). 3 disordered regions span residues 120-140 (HATF…ASDL), 154-190 (GHQL…RMPH), and 220-310 (VGGF…GAQA). Residues 131 to 140 (SVEHDEASDL) are compositionally biased toward basic and acidic residues. Polar residues predominate over residues 163 to 174 (NGSSEVQTSSAQ). The segment covering 242-251 (SSSFTRSLSG) has biased composition (low complexity). Phosphoserine is present on residues S250, S252, and S265. Over residues 268-279 (LVTPPQSPPSSQ) the composition is skewed to pro residues. Phosphothreonine is present on T270. Phosphoserine is present on S274. Residues 298–308 (RSQTLPRTSGA) are compositionally biased toward polar residues. S339 is subject to Phosphoserine. Residues 346–453 (SSIKQILLEW…YVQSLYNHLR (108 aa)) form the Calponin-homology (CH) domain.

The protein belongs to the smoothelin family.

The sequence is that of Smoothelin-like protein 2 (Smtnl2) from Mus musculus (Mouse).